Consider the following 457-residue polypeptide: GTPase Der (457 aa).

2 EngA-type G domains span residues 4 to 169 (PTIA…PENN) and 177 to 352 (IMMS…NQHR). GTP-binding positions include 10 to 17 (GRPNVGKS), 57 to 61 (DTGGL), 120 to 123 (NKCE), 183 to 190 (GRPNVGKS), 230 to 234 (DTAGI), and 295 to 298 (NKWD). The KH-like domain occupies 353–438 (RRVTTSVVNE…PLILLWRGKQ (86 aa)).

This sequence belongs to the TRAFAC class TrmE-Era-EngA-EngB-Septin-like GTPase superfamily. EngA (Der) GTPase family. In terms of assembly, associates with the 50S ribosomal subunit.

In terms of biological role, GTPase that plays an essential role in the late steps of ribosome biogenesis. The protein is GTPase Der of Prochlorococcus marinus (strain MIT 9215).